The primary structure comprises 299 residues: tRNA dimethylallyltransferase (299 aa).

13-20 contacts ATP; sequence GPTASGKT. 15-20 provides a ligand contact to substrate; sequence TASGKT. The interaction with substrate tRNA stretch occupies residues 38 to 41; the sequence is DSRQ.

It belongs to the IPP transferase family. Monomer. Mg(2+) serves as cofactor.

It carries out the reaction adenosine(37) in tRNA + dimethylallyl diphosphate = N(6)-dimethylallyladenosine(37) in tRNA + diphosphate. Catalyzes the transfer of a dimethylallyl group onto the adenine at position 37 in tRNAs that read codons beginning with uridine, leading to the formation of N6-(dimethylallyl)adenosine (i(6)A). The protein is tRNA dimethylallyltransferase of Prochlorococcus marinus (strain AS9601).